The chain runs to 78 residues: Large ribosomal subunit protein bL28 (78 aa).

Residues 1–28 are disordered; it reads MSAICQVTGRQPGYGKSVSHSHRRTSRR.

It belongs to the bacterial ribosomal protein bL28 family.

This is Large ribosomal subunit protein bL28 from Corynebacterium diphtheriae (strain ATCC 700971 / NCTC 13129 / Biotype gravis).